The following is a 386-amino-acid chain: SET and MYND domain-containing protein DDB_G0273589 (386 aa).

The 289-residue stretch at 6–294 (NGLELKSSEN…KGDQLTISYI (289 aa)) folds into the SET domain. The MYND-type zinc finger occupies 51–94 (CFNCIKQLPSVIKLSLKCNQCNEIWYCNEQCKNENINKHQHYEC). The stretch at 136-171 (NNKFIEQQLNNNNNNNNDNEQLTNTLDDVFDLVENQ) forms a coiled coil.

It belongs to the class V-like SAM-binding methyltransferase superfamily.

Its function is as follows. Probable methyltransferase. The protein is SET and MYND domain-containing protein DDB_G0273589 of Dictyostelium discoideum (Social amoeba).